Reading from the N-terminus, the 101-residue chain is Apolipoprotein C-II (101 aa).

Residues 1-22 (MGTRFLLALCLVLLVLGFEVQG) form the signal peptide. The segment at 66-74 (AVDEKLRDL) is lipid binding. The tract at residues 78–101 (STAAMSTYTGIFTDQVLSVLKGEE) is lipoprotein lipase cofactor.

This sequence belongs to the apolipoprotein C2 family. Proapolipoprotein C-II is synthesized as a sialic acid containing glycoprotein which is subsequently desialylated prior to its proteolytic processing. In terms of processing, proapolipoprotein C-II, the major form found in plasma undergoes proteolytic cleavage of its N-terminal hexapeptide to generate apolipoprotein C-II, which occurs as the minor form in plasma.

It localises to the secreted. Component of chylomicrons, very low-density lipoproteins (VLDL), low-density lipoproteins (LDL), and high-density lipoproteins (HDL) in plasma. Plays an important role in lipoprotein metabolism as an activator of lipoprotein lipase. Both proapolipoprotein C-II and apolipoprotein C-II can activate lipoprotein lipase. The sequence is that of Apolipoprotein C-II (APOC2) from Colobus guereza (Mantled guereza).